The following is a 367-amino-acid chain: Dihydroorotate dehydrogenase (quinone) (367 aa).

FMN-binding positions include 67 to 71 (AGFDK) and Thr-91. Lys-71 serves as a coordination point for substrate. 116 to 120 (NRLGF) is a substrate binding site. The FMN site is built by Asn-145 and Asn-178. Asn-178 lines the substrate pocket. Ser-181 serves as the catalytic Nucleophile. Residue Asn-183 coordinates substrate. FMN is bound by residues Lys-219 and Thr-247. Position 248 to 249 (248 to 249 (NT)) interacts with substrate. FMN contacts are provided by residues Gly-269, Gly-298, and 319–320 (YT).

It belongs to the dihydroorotate dehydrogenase family. Type 2 subfamily. In terms of assembly, monomer. It depends on FMN as a cofactor.

The protein resides in the cell membrane. It carries out the reaction (S)-dihydroorotate + a quinone = orotate + a quinol. The protein operates within pyrimidine metabolism; UMP biosynthesis via de novo pathway; orotate from (S)-dihydroorotate (quinone route): step 1/1. Catalyzes the conversion of dihydroorotate to orotate with quinone as electron acceptor. The sequence is that of Dihydroorotate dehydrogenase (quinone) from Roseiflexus castenholzii (strain DSM 13941 / HLO8).